A 503-amino-acid chain; its full sequence is Lithocholate 6-beta-hydroxylase (503 aa).

C442 provides a ligand contact to heme.

Belongs to the cytochrome P450 family. Heme serves as cofactor.

Its subcellular location is the endoplasmic reticulum membrane. It is found in the microsome membrane. It carries out the reaction lithocholate + reduced [NADPH--hemoprotein reductase] + O2 = 6beta-hydroxylithocholate + oxidized [NADPH--hemoprotein reductase] + H2O + H(+). In terms of biological role, catalyzes the 6 beta-hydroxylation of lithocholic acid and steroid hormones. The protein is Lithocholate 6-beta-hydroxylase (CYP3A10) of Mesocricetus auratus (Golden hamster).